Here is a 259-residue protein sequence, read N- to C-terminus: Hydroxyacylglutathione hydrolase (259 aa).

His-56, His-58, Asp-60, His-61, His-112, Asp-133, and His-171 together coordinate Zn(2+).

This sequence belongs to the metallo-beta-lactamase superfamily. Glyoxalase II family. Monomer. The cofactor is Zn(2+).

The enzyme catalyses an S-(2-hydroxyacyl)glutathione + H2O = a 2-hydroxy carboxylate + glutathione + H(+). It functions in the pathway secondary metabolite metabolism; methylglyoxal degradation; (R)-lactate from methylglyoxal: step 2/2. In terms of biological role, thiolesterase that catalyzes the hydrolysis of S-D-lactoyl-glutathione to form glutathione and D-lactic acid. The chain is Hydroxyacylglutathione hydrolase from Pseudomonas putida (strain ATCC 700007 / DSM 6899 / JCM 31910 / BCRC 17059 / LMG 24140 / F1).